The sequence spans 350 residues: Methionine import ATP-binding protein MetN (350 aa).

Residues 2 to 242 form the ABC transporter domain; that stretch reads IELKGISQHF…PRHDVTRALI (241 aa). An ATP-binding site is contributed by 39–46; it reads GRSGAGKS.

Belongs to the ABC transporter superfamily. Methionine importer (TC 3.A.1.24) family. In terms of assembly, the complex is composed of two ATP-binding proteins (MetN), two transmembrane proteins (MetI) and a solute-binding protein (MetQ).

The protein localises to the cell inner membrane. It catalyses the reaction L-methionine(out) + ATP + H2O = L-methionine(in) + ADP + phosphate + H(+). The enzyme catalyses D-methionine(out) + ATP + H2O = D-methionine(in) + ADP + phosphate + H(+). Functionally, part of the ABC transporter complex MetNIQ involved in methionine import. Responsible for energy coupling to the transport system. The protein is Methionine import ATP-binding protein MetN of Ralstonia nicotianae (strain ATCC BAA-1114 / GMI1000) (Ralstonia solanacearum).